We begin with the raw amino-acid sequence, 491 residues long: Rab5 GDP/GTP exchange factor (491 aa).

An interaction with ubiquitinated proteins region spans residues 1-74 (MSLKSERRGI…EEEAFASSQS (74 aa)). The segment at 13–47 (DQSELLCKKGCGYYGNPAWQGFCSKCWREEYHKAR) adopts an A20-type zinc-finger fold. Zn(2+) contacts are provided by Cys19, Cys23, Cys35, and Cys38. A disordered region spans residues 66–85 (EEAFASSQSSQGAQSLTFSK). Low complexity predominate over residues 69 to 84 (FASSQSSQGAQSLTFS). Residues Ser124 and Ser132 each carry the phosphoserine modification. Residues Lys151 and Lys170 each carry the N6-acetyllysine modification. Residues 232–375 (EKKDLAIQKR…IEKLDAQSLN (144 aa)) enclose the VPS9 domain. A phosphoserine mark is found at Ser373, Ser377, and Ser390. A coiled-coil region spans residues 407 to 448 (VKQMYKNLDLLSQLNERQERIMNEAKKLEKDLIDWTDGIAKE). Positions 462–491 (PPNQPLAAIDSENVENDKLPPPLQPQVYAG) are disordered.

In terms of assembly, heterodimer with RABEP1. The heterodimer binds RAB4A and RAB5A that have been activated by GTP-binding. Binds TSC2, GGA1, GGA2, GGA3, AP1G1 and AP1G2. Interacts with RAB21, and with 100-fold lower affinity also with RAB22. Interacts with ubiquitinated EGFR. Interacts with RGS14; the interaction is GTP-dependent. In terms of processing, monoubiquitinated. Expressed in the white matter tracts of the cerebellum, the fimbria hippocampi and the corpus callosum.

The protein localises to the cytoplasm. It is found in the early endosome. Its subcellular location is the recycling endosome. Functionally, rab effector protein acting as linker between gamma-adaptin, RAB4A or RAB5A. Involved in endocytic membrane fusion and membrane trafficking of recycling endosomes. Stimulates nucleotide exchange on RAB5A. Can act as a ubiquitin ligase. In Mus musculus (Mouse), this protein is Rab5 GDP/GTP exchange factor (Rabgef1).